The sequence spans 129 residues: Histone H2A type 2-C (129 aa).

Residues 1 to 22 are disordered; that stretch reads MSGRGKQGGKARAKAKSRSSRA. Residue serine 2 is modified to N-acetylserine. Serine 2 carries the post-translational modification Phosphoserine; by RPS6KA5. The residue at position 4 (arginine 4) is a Citrulline; alternate. Arginine 4 carries the post-translational modification Symmetric dimethylarginine; by PRMT5; alternate. N6-(2-hydroxyisobutyryl)lysine; alternate is present on residues lysine 6 and lysine 10. The residue at position 6 (lysine 6) is an N6-acetyllysine; alternate. Residues 7–19 show a composition bias toward basic residues; that stretch reads QGGKARAKAKSRS. The residue at position 10 (lysine 10) is an N6-lactoyllysine; alternate. Lysine 10 bears the N6-succinyllysine; alternate mark. Glycyl lysine isopeptide (Lys-Gly) (interchain with G-Cter in ubiquitin) cross-links involve residues lysine 14 and lysine 16. Lysine 37 is modified (N6-(2-hydroxyisobutyryl)lysine; alternate). Lysine 37 is subject to N6-(beta-hydroxybutyryl)lysine; alternate. Lysine 37 is modified (N6-crotonyllysine; alternate). Residues lysine 75 and lysine 76 each carry the N6-(2-hydroxyisobutyryl)lysine modification. Lysine 96 bears the N6-(2-hydroxyisobutyryl)lysine; alternate mark. Lysine 96 is modified (N6-succinyllysine; alternate). Position 96 is an N6-glutaryllysine; alternate (lysine 96). At lysine 100 the chain carries N6-glutaryllysine. Position 105 is an N5-methylglutamine (glutamine 105). Lysine 119 is subject to N6-(2-hydroxyisobutyryl)lysine; alternate. 2 positions are modified to N6-crotonyllysine; alternate: lysine 119 and lysine 120. Lysine 119 and lysine 120 each carry N6-glutaryllysine; alternate. Residue lysine 120 forms a Glycyl lysine isopeptide (Lys-Gly) (interchain with G-Cter in ubiquitin); alternate linkage. Threonine 121 carries the post-translational modification Phosphothreonine; by DCAF1. At serine 123 the chain carries Phosphoserine. The residue at position 125 (lysine 125) is an N6-crotonyllysine.

It belongs to the histone H2A family. In terms of assembly, the nucleosome is a histone octamer containing two molecules each of H2A, H2B, H3 and H4 assembled in one H3-H4 heterotetramer and two H2A-H2B heterodimers. The octamer wraps approximately 147 bp of DNA. Post-translationally, deiminated on Arg-4 in granulocytes upon calcium entry. In terms of processing, monoubiquitination of Lys-120 (H2AK119Ub) by RING1, TRIM37 and RNF2/RING2 complex gives a specific tag for epigenetic transcriptional repression and participates in X chromosome inactivation of female mammals. It is involved in the initiation of both imprinted and random X inactivation. Ubiquitinated H2A is enriched in inactive X chromosome chromatin. Ubiquitination of H2A functions downstream of methylation of 'Lys-27' of histone H3 (H3K27me). H2AK119Ub by RNF2/RING2 can also be induced by ultraviolet and may be involved in DNA repair. Following DNA double-strand breaks (DSBs), it is ubiquitinated through 'Lys-63' linkage of ubiquitin moieties by the E2 ligase UBE2N and the E3 ligases RNF8 and RNF168, leading to the recruitment of repair proteins to sites of DNA damage. Ubiquitination at Lys-14 and Lys-16 (H2AK13Ub and H2AK15Ub, respectively) in response to DNA damage is initiated by RNF168 that mediates monoubiquitination at these 2 sites, and 'Lys-63'-linked ubiquitin are then conjugated to monoubiquitin; RNF8 is able to extend 'Lys-63'-linked ubiquitin chains in vitro. H2AK119Ub and ionizing radiation-induced 'Lys-63'-linked ubiquitination (H2AK13Ub and H2AK15Ub) are distinct events. Phosphorylation on Ser-2 (H2AS1ph) is enhanced during mitosis. Phosphorylation on Ser-2 by RPS6KA5/MSK1 directly represses transcription. Acetylation of H3 inhibits Ser-2 phosphorylation by RPS6KA5/MSK1. Phosphorylation at Thr-121 (H2AT120ph) by DCAF1 is present in the regulatory region of many tumor suppresor genes and down-regulates their transcription. Post-translationally, symmetric dimethylation on Arg-4 by the PRDM1/PRMT5 complex may play a crucial role in the germ-cell lineage. In terms of processing, glutamine methylation at Gln-105 (H2AQ104me) by FBL is specifically dedicated to polymerase I. It is present at 35S ribosomal DNA locus and impairs binding of the FACT complex. Crotonylation (Kcr) is specifically present in male germ cells and marks testis-specific genes in post-meiotic cells, including X-linked genes that escape sex chromosome inactivation in haploid cells. Crotonylation marks active promoters and enhancers and confers resistance to transcriptional repressors. It is also associated with post-meiotically activated genes on autosomes. Post-translationally, lactylated in macrophages by EP300/P300 by using lactoyl-CoA directly derived from endogenous or exogenous lactate, leading to stimulates gene transcription.

The protein localises to the nucleus. It localises to the chromosome. Its function is as follows. Core component of nucleosome. Nucleosomes wrap and compact DNA into chromatin, limiting DNA accessibility to the cellular machineries which require DNA as a template. Histones thereby play a central role in transcription regulation, DNA repair, DNA replication and chromosomal stability. DNA accessibility is regulated via a complex set of post-translational modifications of histones, also called histone code, and nucleosome remodeling. The polypeptide is Histone H2A type 2-C (Bos taurus (Bovine)).